The sequence spans 333 residues: Phosphate acyltransferase (333 aa).

It belongs to the PlsX family. As to quaternary structure, homodimer. Probably interacts with PlsY.

Its subcellular location is the cytoplasm. The enzyme catalyses a fatty acyl-[ACP] + phosphate = an acyl phosphate + holo-[ACP]. It participates in lipid metabolism; phospholipid metabolism. Its function is as follows. Catalyzes the reversible formation of acyl-phosphate (acyl-PO(4)) from acyl-[acyl-carrier-protein] (acyl-ACP). This enzyme utilizes acyl-ACP as fatty acyl donor, but not acyl-CoA. This is Phosphate acyltransferase from Lactobacillus johnsonii (strain CNCM I-12250 / La1 / NCC 533).